We begin with the raw amino-acid sequence, 635 residues long: DNA-directed RNA polymerase subunit gamma (635 aa).

Zn(2+)-binding residues include C74, C76, C89, and C92. The Mg(2+) site is built by D471, D473, and D475.

It belongs to the RNA polymerase beta' chain family. RpoC1 subfamily. As to quaternary structure, in cyanobacteria the RNAP catalytic core is composed of 2 alpha, 1 beta, 1 beta', 1 gamma and 1 omega subunit. When a sigma factor is associated with the core the holoenzyme is formed, which can initiate transcription. Mg(2+) serves as cofactor. The cofactor is Zn(2+).

The enzyme catalyses RNA(n) + a ribonucleoside 5'-triphosphate = RNA(n+1) + diphosphate. Functionally, DNA-dependent RNA polymerase catalyzes the transcription of DNA into RNA using the four ribonucleoside triphosphates as substrates. The protein is DNA-directed RNA polymerase subunit gamma of Prochlorococcus marinus (strain NATL1A).